Here is a 331-residue protein sequence, read N- to C-terminus: Ketol-acid reductoisomerase (NADP(+)) (331 aa).

One can recognise a KARI N-terminal Rossmann domain in the interval 2–182 (AQLFYDSDAD…GGTRAGILET (181 aa)). NADP(+)-binding positions include 25-28 (YGSQ), Ser-51, Ser-53, and 83-86 (DEFQ). His-108 is an active-site residue. Gly-134 is an NADP(+) binding site. Residues 183 to 328 (NFKEETETDL…KGLRSMFSWL (146 aa)) form the KARI C-terminal knotted domain. Asp-191, Glu-195, Glu-227, and Glu-231 together coordinate Mg(2+). Residue Ser-252 participates in substrate binding.

Belongs to the ketol-acid reductoisomerase family. Mg(2+) is required as a cofactor.

The enzyme catalyses (2R)-2,3-dihydroxy-3-methylbutanoate + NADP(+) = (2S)-2-acetolactate + NADPH + H(+). The catalysed reaction is (2R,3R)-2,3-dihydroxy-3-methylpentanoate + NADP(+) = (S)-2-ethyl-2-hydroxy-3-oxobutanoate + NADPH + H(+). Its pathway is amino-acid biosynthesis; L-isoleucine biosynthesis; L-isoleucine from 2-oxobutanoate: step 2/4. The protein operates within amino-acid biosynthesis; L-valine biosynthesis; L-valine from pyruvate: step 2/4. Functionally, involved in the biosynthesis of branched-chain amino acids (BCAA). Catalyzes an alkyl-migration followed by a ketol-acid reduction of (S)-2-acetolactate (S2AL) to yield (R)-2,3-dihydroxy-isovalerate. In the isomerase reaction, S2AL is rearranged via a Mg-dependent methyl migration to produce 3-hydroxy-3-methyl-2-ketobutyrate (HMKB). In the reductase reaction, this 2-ketoacid undergoes a metal-dependent reduction by NADPH to yield (R)-2,3-dihydroxy-isovalerate. The chain is Ketol-acid reductoisomerase (NADP(+)) from Synechococcus sp. (strain CC9311).